A 326-amino-acid chain; its full sequence is Vitamin B12 import system permease protein BtuC (326 aa).

The next 9 helical transmembrane spans lie at 13–35 (IRWL…CAGE), 55–77 (IRLP…GAVM), 90–107 (LLGV…AVLL), 111–133 (QLPN…LILL), 146–168 (LLAG…YFST), 188–205 (WRQS…LWIC), 242–264 (MVGV…PHIL), 274–296 (VLLP…VARL), and 303–322 (LPIG…WLLL).

This sequence belongs to the binding-protein-dependent transport system permease family. FecCD subfamily. The complex is composed of two ATP-binding proteins (BtuD), two transmembrane proteins (BtuC) and a solute-binding protein (BtuF).

It is found in the cell inner membrane. Functionally, part of the ABC transporter complex BtuCDF involved in vitamin B12 import. Involved in the translocation of the substrate across the membrane. The sequence is that of Vitamin B12 import system permease protein BtuC from Shigella flexneri.